Reading from the N-terminus, the 57-residue chain is Large ribosomal subunit protein bL32c (57 aa).

The protein belongs to the bacterial ribosomal protein bL32 family.

It is found in the plastid. It localises to the chloroplast. This chain is Large ribosomal subunit protein bL32c, found in Phalaenopsis aphrodite subsp. formosana (Moth orchid).